The following is a 122-amino-acid chain: Large ribosomal subunit protein bL17 (122 aa).

This sequence belongs to the bacterial ribosomal protein bL17 family. In terms of assembly, part of the 50S ribosomal subunit. Contacts protein L32.

This Wigglesworthia glossinidia brevipalpis protein is Large ribosomal subunit protein bL17.